The sequence spans 384 residues: 2-deoxy-scyllo-inosose synthase (384 aa).

NAD(+) contacts are provided by residues D42, 73–76 (EVHK), 105–109 (GITGN), 129–130 (TT), 140–142 (SLK), and 151–152 (KN). K142 is an active-site residue. A Co(2+)-binding site is contributed by E184. The active site involves E244. Residues H247 and H263 each coordinate Co(2+).

The protein belongs to the sugar phosphate cyclases superfamily. DOI synthase family. NAD(+) serves as cofactor. Co(2+) is required as a cofactor.

The enzyme catalyses D-glucose 6-phosphate = 2-deoxy-L-scyllo-inosose + phosphate. The protein operates within metabolic intermediate biosynthesis; 2-deoxystreptamine biosynthesis; 2-deoxystreptamine from D-glucose 6-phosphate: step 1/4. It functions in the pathway antibiotic biosynthesis; lividomycin biosynthesis. Its function is as follows. Catalyzes the intramolecular carbocycle formation from D-glucose-6-phosphate to 2-deoxy-scyllo-inosose (DOI). The protein is 2-deoxy-scyllo-inosose synthase (livC) of Streptomyces lividus.